The primary structure comprises 360 residues: Phospho-N-acetylmuramoyl-pentapeptide-transferase (360 aa).

Transmembrane regions (helical) follow at residues 27 to 47 (IVSL…LIAW), 72 to 92 (PTMG…MWAY), 94 to 114 (SNPY…VGFI), 132 to 152 (WKYF…YSIG), 168 to 188 (IMPQ…VGTS), 199 to 219 (GLAI…AWAT), 236 to 256 (AGEL…FLWF), 263 to 283 (VFMG…IAVL), 288 to 308 (FLLV…ILQV), and 338 to 358 (VIVR…ATLK).

The protein belongs to the glycosyltransferase 4 family. MraY subfamily. Mg(2+) serves as cofactor.

The protein resides in the cell inner membrane. The catalysed reaction is UDP-N-acetyl-alpha-D-muramoyl-L-alanyl-gamma-D-glutamyl-meso-2,6-diaminopimeloyl-D-alanyl-D-alanine + di-trans,octa-cis-undecaprenyl phosphate = di-trans,octa-cis-undecaprenyl diphospho-N-acetyl-alpha-D-muramoyl-L-alanyl-D-glutamyl-meso-2,6-diaminopimeloyl-D-alanyl-D-alanine + UMP. Its pathway is cell wall biogenesis; peptidoglycan biosynthesis. Its function is as follows. Catalyzes the initial step of the lipid cycle reactions in the biosynthesis of the cell wall peptidoglycan: transfers peptidoglycan precursor phospho-MurNAc-pentapeptide from UDP-MurNAc-pentapeptide onto the lipid carrier undecaprenyl phosphate, yielding undecaprenyl-pyrophosphoryl-MurNAc-pentapeptide, known as lipid I. This Yersinia pseudotuberculosis serotype O:1b (strain IP 31758) protein is Phospho-N-acetylmuramoyl-pentapeptide-transferase.